Here is a 162-residue protein sequence, read N- to C-terminus: 2-C-methyl-D-erythritol 2,4-cyclodiphosphate synthase (162 aa).

Aspartate 12 and histidine 14 together coordinate a divalent metal cation. 4-CDP-2-C-methyl-D-erythritol 2-phosphate-binding positions include 12–14 (DVH) and 38–39 (HS). Residue histidine 46 participates in a divalent metal cation binding. Residues 60–62 (DIG), 65–69 (FPDTD), and arginine 146 contribute to the 4-CDP-2-C-methyl-D-erythritol 2-phosphate site.

Belongs to the IspF family. In terms of assembly, homotrimer. A divalent metal cation serves as cofactor.

It carries out the reaction 4-CDP-2-C-methyl-D-erythritol 2-phosphate = 2-C-methyl-D-erythritol 2,4-cyclic diphosphate + CMP. It functions in the pathway isoprenoid biosynthesis; isopentenyl diphosphate biosynthesis via DXP pathway; isopentenyl diphosphate from 1-deoxy-D-xylulose 5-phosphate: step 4/6. Involved in the biosynthesis of isopentenyl diphosphate (IPP) and dimethylallyl diphosphate (DMAPP), two major building blocks of isoprenoid compounds. Catalyzes the conversion of 4-diphosphocytidyl-2-C-methyl-D-erythritol 2-phosphate (CDP-ME2P) to 2-C-methyl-D-erythritol 2,4-cyclodiphosphate (ME-CPP) with a corresponding release of cytidine 5-monophosphate (CMP). This chain is 2-C-methyl-D-erythritol 2,4-cyclodiphosphate synthase, found in Bordetella parapertussis (strain 12822 / ATCC BAA-587 / NCTC 13253).